A 335-amino-acid chain; its full sequence is MSSTLSLKQLIGELEILESEAAKEIASAENSESIEKLRLSFLGKKGKLSLLLGGMKNLSNEERPLIGQRANVLKTQLQELIKEKLEILKTQALSQILIKETIDVTAPPTGITQGHRHPLITTTEQIIDLFLGLGYQVSEGPEIENDYYNFEALNIPPDHPARDMQDTFYLGGEYLLRTHTSPVQIRCLESKKPPVRIVSPGRVYRRDAVDATHSPVFHQVEVLAIDEKLDFSHLRGTVMAFLKAFFGDLPIRFRASYFPFTEPSAEVDVQWRGKWLEVMGCGMVDPAVLEELGIDPEKYSGFAAGLGVERFCMVRHGLDDIRKLYTSDLRFLEQF.

Glu-262 contributes to the Mg(2+) binding site.

The protein belongs to the class-II aminoacyl-tRNA synthetase family. Phe-tRNA synthetase alpha subunit type 1 subfamily. Tetramer of two alpha and two beta subunits. Requires Mg(2+) as cofactor.

Its subcellular location is the cytoplasm. The catalysed reaction is tRNA(Phe) + L-phenylalanine + ATP = L-phenylalanyl-tRNA(Phe) + AMP + diphosphate + H(+). This is Phenylalanine--tRNA ligase alpha subunit from Prochlorococcus marinus (strain NATL2A).